We begin with the raw amino-acid sequence, 85 residues long: U4-theraphotoxin-Hhn1o (85 aa).

The signal sequence occupies residues 1 to 22; sequence MKVTLIAILTCAAVLVLHTTAA. Residues 23 to 48 constitute a propeptide that is removed on maturation; it reads EELEAESQLMEVGMPDTELAAVDEER. Cystine bridges form between C52–C66, C56–C77, and C71–C82.

The protein belongs to the neurotoxin 12 (Hwtx-2) family. 02 (Hwtx-2) subfamily. Expressed by the venom gland.

It is found in the secreted. In terms of biological role, postsynaptic neurotoxin. The protein is U4-theraphotoxin-Hhn1o of Cyriopagopus hainanus (Chinese bird spider).